We begin with the raw amino-acid sequence, 119 residues long: Large ribosomal subunit protein bL20 (119 aa).

The protein belongs to the bacterial ribosomal protein bL20 family.

Binds directly to 23S ribosomal RNA and is necessary for the in vitro assembly process of the 50S ribosomal subunit. It is not involved in the protein synthesizing functions of that subunit. The chain is Large ribosomal subunit protein bL20 from Albidiferax ferrireducens (strain ATCC BAA-621 / DSM 15236 / T118) (Rhodoferax ferrireducens).